Consider the following 248-residue polypeptide: Deoxyribose-phosphate aldolase (248 aa).

Asp106 functions as the Proton donor/acceptor in the catalytic mechanism. Lys168 functions as the Schiff-base intermediate with acetaldehyde in the catalytic mechanism. The active-site Proton donor/acceptor is the Lys197.

The protein belongs to the DeoC/FbaB aldolase family. DeoC type 1 subfamily.

The protein resides in the cytoplasm. The enzyme catalyses 2-deoxy-D-ribose 5-phosphate = D-glyceraldehyde 3-phosphate + acetaldehyde. The protein operates within carbohydrate degradation; 2-deoxy-D-ribose 1-phosphate degradation; D-glyceraldehyde 3-phosphate and acetaldehyde from 2-deoxy-alpha-D-ribose 1-phosphate: step 2/2. In terms of biological role, catalyzes a reversible aldol reaction between acetaldehyde and D-glyceraldehyde 3-phosphate to generate 2-deoxy-D-ribose 5-phosphate. This Sinorhizobium medicae (strain WSM419) (Ensifer medicae) protein is Deoxyribose-phosphate aldolase.